The sequence spans 631 residues: 1-deoxy-D-xylulose-5-phosphate synthase (631 aa).

Residues histidine 87 and 128–130 (GHS) contribute to the thiamine diphosphate site. Aspartate 159 provides a ligand contact to Mg(2+). Residues 160–161 (GA), asparagine 188, phenylalanine 295, and glutamate 377 contribute to the thiamine diphosphate site. Asparagine 188 provides a ligand contact to Mg(2+).

Belongs to the transketolase family. DXPS subfamily. As to quaternary structure, homodimer. Mg(2+) is required as a cofactor. The cofactor is thiamine diphosphate.

The enzyme catalyses D-glyceraldehyde 3-phosphate + pyruvate + H(+) = 1-deoxy-D-xylulose 5-phosphate + CO2. It functions in the pathway metabolic intermediate biosynthesis; 1-deoxy-D-xylulose 5-phosphate biosynthesis; 1-deoxy-D-xylulose 5-phosphate from D-glyceraldehyde 3-phosphate and pyruvate: step 1/1. Catalyzes the acyloin condensation reaction between C atoms 2 and 3 of pyruvate and glyceraldehyde 3-phosphate to yield 1-deoxy-D-xylulose-5-phosphate (DXP). In Pseudomonas putida (strain GB-1), this protein is 1-deoxy-D-xylulose-5-phosphate synthase.